We begin with the raw amino-acid sequence, 281 residues long: Probable endonuclease 4 (281 aa).

Zn(2+)-binding residues include His-69, His-109, Glu-145, Asp-179, His-182, His-216, Asp-229, His-231, and Glu-261.

Belongs to the AP endonuclease 2 family. Zn(2+) is required as a cofactor.

It catalyses the reaction Endonucleolytic cleavage to 5'-phosphooligonucleotide end-products.. Endonuclease IV plays a role in DNA repair. It cleaves phosphodiester bonds at apurinic or apyrimidinic (AP) sites, generating a 3'-hydroxyl group and a 5'-terminal sugar phosphate. This chain is Probable endonuclease 4, found in Nautilia profundicola (strain ATCC BAA-1463 / DSM 18972 / AmH).